The following is a 382-amino-acid chain: Apolipoprotein A-IV (382 aa).

The signal sequence occupies residues 1 to 20 (MFLRAVVLTLALVAVTGARA). A run of 13 repeats spans residues 33-54 (DYFS…QSEL), 60-81 (ALFQ…KKLV), 82-103 (PFAT…EEIR), 115-136 (PHAN…QRLG), 137-158 (PYAD…RHLT), 159-180 (SHAQ…SSLT), 181-202 (PYAD…GHLT), 203-224 (PYAD…RSLA), 225-246 (PYAQ…FQMK), 247-268 (KNAE…QRLA), 269-286 (PVVE…KGLQ), 287-308 (ESLA…HNMG), and 309-330 (PYGD…QKLG). Positions 33-330 (DYFSQLSNNA…QVEELRQKLG (298 aa)) are 13 X 22 AA approximate tandem repeats. The tract at residues 362–382 (ENQDMPLALPEQEQAPGPLES) is disordered.

This sequence belongs to the apolipoprotein A1/A4/E family. As to quaternary structure, homodimer.

It is found in the secreted. In terms of biological role, may have a role in chylomicrons and VLDL secretion and catabolism. Required for efficient activation of lipoprotein lipase by ApoC-II; potent activator of LCAT. Apoa-IV is a major component of HDL and chylomicrons. The chain is Apolipoprotein A-IV (APOA4) from Acinonyx jubatus (Cheetah).